The primary structure comprises 239 residues: Fatty acid metabolism regulator protein (239 aa).

In terms of domain architecture, HTH gntR-type spans 6–74 (QSPAGFAEEY…HGKPTKVNNF (69 aa)). Positions 34–53 (ERELSELIGVTRTTLREVLQ) form a DNA-binding region, H-T-H motif.

Homodimer.

The protein localises to the cytoplasm. Functionally, multifunctional regulator of fatty acid metabolism. In Shigella flexneri, this protein is Fatty acid metabolism regulator protein.